The primary structure comprises 69 residues: Conotoxin SIVA (69 aa).

Positions 1 to 21 (MGMRMMFTVFLLVVLATTVVS) are cleaved as a signal peptide. The propeptide occupies 22-38 (TPSDRASDGRNAAVHER). Q39 carries the post-translational modification Pyrrolidone carboxylic acid. A glycan (O-linked (HexNAc...) serine) is linked at S45. 4-hydroxyproline occurs at positions 55, 60, and 61. C68 is subject to Cysteine amide.

This sequence belongs to the conotoxin A superfamily. In terms of processing, contains 3 disulfide bonds. Post-translationally, O-linked glycan consists of Hex3-HexNAc2 pentasaccharide. Expressed by the venom duct.

The protein localises to the secreted. Neurotoxin with probable activity on sodium channel. Induces intense repetitive firing of the frog neuromuscular junction, leading to a tetanic contracture in muscle fiber (spastic paralysis). In vivo, shows the same effect as the whole venom when injected on fish. Intraperitoneal injection into fish induces a period of rapid swimming followed by a spastic paralysis with stiff fibrillating fins. At high doses, the peptide is lethal to both fish and mice. This Conus striatus (Striated cone) protein is Conotoxin SIVA.